The sequence spans 776 residues: Acetone carboxylase alpha subunit (776 aa).

In terms of assembly, heterohexamer of two alpha, two beta and two gamma subunits. It depends on Fe cation as a cofactor. Requires Mg(2+) as cofactor. The cofactor is Zn(2+). The N-terminus is blocked.

The catalysed reaction is acetone + hydrogencarbonate + 2 ATP + 3 H2O = acetoacetate + 2 AMP + 4 phosphate + 4 H(+). In terms of biological role, catalyzes the carboxylation of acetone to form acetoacetate. Has a reduced activity on butanone, and no activity on 2-pentatone, 3-pentatone, 2-hexanone, chloroacetone, pyruvate, phosphoenolpyruvate, acetaldehyde, propionaldehyde and propylene oxide. In Xanthobacter autotrophicus (strain ATCC BAA-1158 / Py2), this protein is Acetone carboxylase alpha subunit.